Here is a 279-residue protein sequence, read N- to C-terminus: Pleckstrin homology domain-containing family F member 1 (279 aa).

A PH domain is found at 35–131; the sequence is VLLGEGVLTK…WISHIEECVR (97 aa). The segment at 152-212 adopts an FYVE-type zinc-finger fold; the sequence is DKATDICMRC…VCSLCYRELA (61 aa). Zn(2+) is bound by residues cysteine 158, cysteine 161, cysteine 175, cysteine 178, cysteine 183, cysteine 186, cysteine 204, and cysteine 207. Residues 220–263 are disordered; it reads AREGIGGSPPQLSHLGGTVCGASSGDDDDSDEDREGNGDGDWPT. The segment covering 244-253 has biased composition (acidic residues); that stretch reads GDDDDSDEDR.

In terms of tissue distribution, widely expressed.

Its subcellular location is the nucleus. The protein localises to the cytoplasm. It is found in the perinuclear region. The protein resides in the lysosome. Its function is as follows. May induce apoptosis through the lysosomal-mitochondrial pathway. Translocates to the lysosome initiating the permeabilization of lysosomal membrane (LMP) and resulting in the release of CTSD and CTSL to the cytoplasm. Triggers the caspase-independent apoptosis by altering mitochondrial membrane permeabilization (MMP) resulting in the release of PDCD8. This chain is Pleckstrin homology domain-containing family F member 1 (Plekhf1), found in Mus musculus (Mouse).